The chain runs to 92 residues: YcgL domain-containing protein Shewmr7_2249 (92 aa).

The YcgL domain occupies Met1–Arg85.

The sequence is that of YcgL domain-containing protein Shewmr7_2249 from Shewanella sp. (strain MR-7).